A 162-amino-acid polypeptide reads, in one-letter code: Interleukin-15 (162 aa).

The first 29 residues, 1–29 (MRISKPHLRSVSIQCYLCLLLNSHFLTEA), serve as a signal peptide directing secretion. A propeptide spanning residues 30–48 (GIHVFILGCFSAGLPKTEA) is cleaved from the precursor. 2 disulfide bridges follow: cysteine 83–cysteine 133 and cysteine 90–cysteine 136. An N-linked (GlcNAc...) asparagine glycan is attached at asparagine 127.

This sequence belongs to the IL-15/IL-21 family.

It is found in the secreted. Cytokine that plays a major role in the development of inflammatory and protective immune responses to microbial invaders and parasites by modulating immune cells of both the innate and adaptive immune systems. Stimulates the proliferation of natural killer cells, T-cells and B-cells and promotes the secretion of several cytokines. In monocytes, induces the production of IL8 and monocyte chemotactic protein 1/CCL2, two chemokines that attract neutrophils and monocytes respectively to sites of infection. Unlike most cytokines, which are secreted in soluble form, IL15 is expressed in association with its high affinity IL15RA on the surface of IL15-producing cells and delivers signals to target cells that express IL2RB and IL2RG receptor subunits. Binding to its receptor triggers the phosphorylation of JAK1 and JAK3 and the recruitment and subsequent phosphorylation of signal transducer and activator of transcription-3/STAT3 and STAT5. In mast cells, induces the rapid tyrosine phosphorylation of STAT6 and thereby controls mast cell survival and release of cytokines such as IL4. This Macaca mulatta (Rhesus macaque) protein is Interleukin-15 (IL15).